A 695-amino-acid chain; its full sequence is Calcium-binding acidic-repeat protein (695 aa).

The or 23 signal peptide spans 1–20; it reads MSHLWCWLFLVLCLACLVLS. TSP type-3 repeat units follow at residues 24–38, 47–56, 70–82, 184–196, 202–214, and 248–260; these read KDSDGDGLLDVDEIN, ADSDQDGLTD, KDTDDDSIGDGVE, GDSDDDGVSDGAE, KDSDGDGLTDEEE, and GDSDDDGLGDGAE. Residues 45-695 are disordered; that stretch reads YNADSDQDGL…TDPWRSDHSV (651 aa). Positions 59–70 are enriched in basic and acidic residues; it reads EVNRHQTHPQDK. 3 stretches are compositionally biased toward acidic residues: residues 271–283, 291–306, and 313–324; these read ADSDNDGLDDGEE, PEDPDSDNDGLNDGDE, and DPEEDDSDEDGV. TSP type-3 repeat units lie at residues 294 to 308, 317 to 329, 340 to 352, 363 to 375, 379 to 393, 402 to 414, 425 to 437, 470 to 482, 493 to 505, 516 to 528, 539 to 551, 555 to 569, 600 to 609, 623 to 635, and 646 to 658; these read PDSDNDGLNDGDEVN, DDSDEDGVCDGAE, EDSDNDGIPDGAE, EDSDDDGIADGAE, TDSDGDGLPDEDEVA, ADSDYDGLTDGAE, KDTDDDGLGDGVE, EDTDDDGLTDGAE, ADTDDDGLTDGAE, ADSDGDGLSDGAE, GDSDDDGVPDAAE, KDSDGDGLSDTDEVR, RDTDGDGVAD, and ADSDDDGLSDGAE. Acidic residues-rich tracts occupy residues 361–370 and 381–392; these read NDEDSDDDGI and SDGDGLPDEDEV. Composition is skewed to acidic residues over residues 467 to 477 and 491 to 500; these read PNDEDTDDDGL and EDADTDDDGL. The segment covering 537–546 has biased composition (acidic residues); the sequence is NDGDSDDDGV. A compositionally biased stretch (basic and acidic residues) spans 589–603; that stretch reads EILKHKTDPRNRDTD. Residues 665–679 are compositionally biased toward basic and acidic residues; the sequence is NAKDGDSDDDGKADG.

It is found in the secreted. Its subcellular location is the endoplasmic reticulum. Its function is as follows. May function as a calcium-binding protein. The protein is Calcium-binding acidic-repeat protein of Euglena gracilis.